Here is a 364-residue protein sequence, read N- to C-terminus: Spermatogenesis-associated protein 22 (364 aa).

Polar residues-rich tracts occupy residues 1–13 (MKRNLNENSTRST), 30–48 (QPLTSNPCTNDPGISNASD), 73–108 (KTVNTGQIPHSVSNSLRSQDSLSKPIQSNAGSSKSD), 137–169 (LMTNNGINSGPINLGAQQQKQLRVSESTNLPNQ), and 177–189 (QTKSSEIPGSTMR). 2 disordered regions span residues 1 to 51 (MKRN…DNYD) and 70 to 189 (PLTK…STMR).

In terms of assembly, component of a multiprotein complex with MEIOB and RPA2. Interacts with MEIOB. Interacts with the complex BRME1:HSF2BP:BRCA2.

Its subcellular location is the chromosome. Its function is as follows. Meiosis-specific protein required for homologous recombination in meiosis I. In Bos taurus (Bovine), this protein is Spermatogenesis-associated protein 22 (SPATA22).